Reading from the N-terminus, the 102-residue chain is Integration host factor subunit alpha (102 aa).

A disordered region spans residues phenylalanine 49 to isoleucine 71.

Belongs to the bacterial histone-like protein family. In terms of assembly, heterodimer of an alpha and a beta chain.

Its function is as follows. This protein is one of the two subunits of integration host factor, a specific DNA-binding protein that functions in genetic recombination as well as in transcriptional and translational control. The protein is Integration host factor subunit alpha of Nitrosomonas eutropha (strain DSM 101675 / C91 / Nm57).